Here is a 138-residue protein sequence, read N- to C-terminus: Large ribosomal subunit protein uL16 (138 aa).

Residues 1-19 show a composition bias toward basic residues; that stretch reads MLIPRRVKHRKQHHPKRSG. Residues 1 to 24 are disordered; it reads MLIPRRVKHRKQHHPKRSGAAKGG.

Belongs to the universal ribosomal protein uL16 family. As to quaternary structure, part of the 50S ribosomal subunit.

Functionally, binds 23S rRNA and is also seen to make contacts with the A and possibly P site tRNAs. This chain is Large ribosomal subunit protein uL16, found in Micrococcus luteus (strain ATCC 4698 / DSM 20030 / JCM 1464 / CCM 169 / CCUG 5858 / IAM 1056 / NBRC 3333 / NCIMB 9278 / NCTC 2665 / VKM Ac-2230) (Micrococcus lysodeikticus).